The following is a 77-amino-acid chain: uncharacterized protein (77 aa).

Positions 1 to 15 (MNRTSESVEPQQNEK) are enriched in polar residues. Disordered regions lie at residues 1–20 (MNRT…AVHW) and 31–52 (TYSN…QRTF). The span at 33 to 44 (SNEDDEDNEEGD) shows a compositional bias: acidic residues.

This is an uncharacterized protein from Schizosaccharomyces pombe (strain 972 / ATCC 24843) (Fission yeast).